The chain runs to 298 residues: tRNA dimethylallyltransferase (298 aa).

ATP is bound at residue 16–23 (GPTASGKS). Residue 18-23 (TASGKS) coordinates substrate. Interaction with substrate tRNA stretches follow at residues 41–44 (DSMQ) and 165–169 (QRIVR).

This sequence belongs to the IPP transferase family. As to quaternary structure, monomer. Mg(2+) serves as cofactor.

The catalysed reaction is adenosine(37) in tRNA + dimethylallyl diphosphate = N(6)-dimethylallyladenosine(37) in tRNA + diphosphate. Functionally, catalyzes the transfer of a dimethylallyl group onto the adenine at position 37 in tRNAs that read codons beginning with uridine, leading to the formation of N6-(dimethylallyl)adenosine (i(6)A). The polypeptide is tRNA dimethylallyltransferase (Rhizobium radiobacter (Agrobacterium tumefaciens)).